The sequence spans 87 residues: U3-theraphotoxin-Hhn1a 5 (87 aa).

The first 24 residues, 1–24 (MVNMKASMFLTFAGLVLLFVVCYA), serve as a signal peptide directing secretion. A propeptide spanning residues 25 to 52 (SESEEKEFPKEMLSSIFAVDNDFKQEER) is cleaved from the precursor. 3 disulfides stabilise this stretch: Cys-54-Cys-67, Cys-61-Cys-72, and Cys-66-Cys-79.

This sequence belongs to the neurotoxin 10 (Hwtx-1) family. 51 (Hntx-8) subfamily. Hntx-8 sub-subfamily. In terms of tissue distribution, expressed by the venom gland.

The protein resides in the secreted. Ion channel inhibitor. This chain is U3-theraphotoxin-Hhn1a 5, found in Cyriopagopus hainanus (Chinese bird spider).